Here is a 128-residue protein sequence, read N- to C-terminus: L-ectoine synthase (128 aa).

The protein belongs to the ectoine synthase family.

It catalyses the reaction (2S)-4-acetamido-2-aminobutanoate = L-ectoine + H2O. It participates in amine and polyamine biosynthesis; ectoine biosynthesis; L-ectoine from L-aspartate 4-semialdehyde: step 3/3. Its function is as follows. Catalyzes the circularization of gamma-N-acetyl-alpha,gamma-diaminobutyric acid (ADABA) to ectoine (1,4,5,6-tetrahydro-2-methyl-4-pyrimidine carboxylic acid), which is an excellent osmoprotectant. The protein is L-ectoine synthase of Oceanobacillus iheyensis (strain DSM 14371 / CIP 107618 / JCM 11309 / KCTC 3954 / HTE831).